A 118-amino-acid chain; its full sequence is Ferredoxin-thioredoxin reductase, catalytic chain (118 aa).

Residue Cys56 participates in [4Fe-4S] cluster binding. Cys58 serves as the catalytic Nucleophile. A disulfide bridge links Cys58 with Cys88. [4Fe-4S] cluster-binding residues include Cys75, Cys77, and Cys86.

The protein belongs to the ferredoxin thioredoxin reductase beta subunit family. In terms of assembly, heterodimer of subunit A (variable subunit) and subunit B (catalytic subunit). Heterodimeric FTR forms a complex with ferredoxin and thioredoxin. [4Fe-4S] cluster is required as a cofactor.

The catalysed reaction is [thioredoxin]-disulfide + 2 reduced [2Fe-2S]-[ferredoxin] + 2 H(+) = [thioredoxin]-dithiol + 2 oxidized [2Fe-2S]-[ferredoxin]. Functionally, catalytic subunit of the ferredoxin-thioredoxin reductase (FTR), which catalyzes the two-electron reduction of thioredoxins by the electrons provided by reduced ferredoxin. This Synechocystis sp. (strain ATCC 27184 / PCC 6803 / Kazusa) protein is Ferredoxin-thioredoxin reductase, catalytic chain.